A 443-amino-acid chain; its full sequence is Transcriptional adapter 2-alpha (443 aa).

S6 is subject to Phosphoserine. The ZZ-type zinc-finger motif lies at 12 to 69; the sequence is SDKPPCRGCSSYLMEPYIKCAECGPPPFFLCLQCFTRGFEYKKHQSDHTYEIMTSDFP. Zn(2+) is bound by residues C17, C20, C31, C34, C42, C45, H55, and H59. An SANT domain is found at 70-122; that stretch reads VLDPSWTAQEEMALLEAVMDCGFGNWQDVANQMCTKTKEECEKHYMKHFINNP. Glycyl lysine isopeptide (Lys-Gly) (interchain with G-Cter in SUMO2) cross-links involve residues K132 and K138. A compositionally biased stretch (polar residues) spans 347 to 359; sequence LSPSVPMTSNSGR. Residues 347-372 form a disordered region; sequence LSPSVPMTSNSGRRSAPPLNLTGLPG. The 88-residue stretch at 356–443 folds into the SWIRM domain; it reads NSGRRSAPPL…LIREGYITKA (88 aa). A DNA-binding region spans residues 426–435; that stretch reads KTRKIYDFLI.

As to quaternary structure, interacts with GCN5 and NR3C1. Associated with the P/CAF protein in the PCAF complex. Component of the PCAF complex, at least composed of TADA2L/ADA2, TADA3L/ADA3, TAF5L/PAF65-beta, TAF6L/PAF65-alpha, TAF10/TAFII30, TAF12/TAFII20, TAF9/TAFII31 and TRRAP. Component of the ADA2A-containing complex (ATAC), composed of KAT14, KAT2A, TADA2L, TADA3L, ZZ3, MBIP, WDR5, YEATS2, CCDC101 and DR1. Interacts with CCDC134.

It is found in the nucleus. The protein localises to the chromosome. Component of the ATAC complex, a complex with histone acetyltransferase activity on histones H3 and H4. Required for the function of some acidic activation domains, which activate transcription from a distant site. Binds double-stranded DNA. Binds dinucleosomes, probably at the linker region between neighboring nucleosomes. Plays a role in chromatin remodeling. May promote TP53/p53 'Lys-321' acetylation, leading to reduced TP53 stability and transcriptional activity. May also promote XRCC6 acetylation thus facilitating cell apoptosis in response to DNA damage. The chain is Transcriptional adapter 2-alpha (TADA2A) from Bos taurus (Bovine).